The chain runs to 351 residues: MYSLFRPLLFTCDTERAHDISLRTLDIAYHSGALPLLTRHTRPLPTTAFGLNFPNPVGLAAGLDKNGTHIDALFALGFGFIEIGTTTPRPQAGNPKPRLFRLTQQQAVINRMGFNNLGVDALVRNVAGARRRNGPLGINIGKNKDTPNEQASNDYRYCLERVYALADYVTINLSSPNTAGLRALQEEQTLRRLIGELRETQETLAAKHGRHVPMLIKMAPDLSDSDIDAAARVLNEMSVDGVIATNTTVTRPLLRQHPLASEAGGLSGAPLLGQSTLVLRRLRTHLPETIDLIGVGGICCGADAGAKMAAGASLVQCYTGLIFKGPQLVGECVEAIRRRLEASSSGRENTQ.

Residues 61-65 (AGLDK) and threonine 85 contribute to the FMN site. Substrate is bound at residue lysine 65. Residue 110-114 (NRMGF) coordinates substrate. Residues asparagine 139 and asparagine 172 each coordinate FMN. Asparagine 172 provides a ligand contact to substrate. Serine 175 (nucleophile) is an active-site residue. Residue asparagine 177 coordinates substrate. Lysine 217 and threonine 245 together coordinate FMN. Position 246–247 (246–247 (NT)) interacts with substrate. FMN contacts are provided by residues glycine 268, glycine 297, and 318 to 319 (YT).

Belongs to the dihydroorotate dehydrogenase family. Type 2 subfamily. As to quaternary structure, monomer. Requires FMN as cofactor.

The protein localises to the cell membrane. The catalysed reaction is (S)-dihydroorotate + a quinone = orotate + a quinol. Its pathway is pyrimidine metabolism; UMP biosynthesis via de novo pathway; orotate from (S)-dihydroorotate (quinone route): step 1/1. Catalyzes the conversion of dihydroorotate to orotate with quinone as electron acceptor. This is Dihydroorotate dehydrogenase (quinone) from Xylella fastidiosa (strain M12).